We begin with the raw amino-acid sequence, 151 residues long: Regulatory protein RecX (151 aa).

The protein belongs to the RecX family.

Its subcellular location is the cytoplasm. Its function is as follows. Modulates RecA activity. This Actinobacillus pleuropneumoniae serotype 5b (strain L20) protein is Regulatory protein RecX.